A 688-amino-acid chain; its full sequence is Elongation factor G (688 aa).

Positions 6–280 (KLFRNFGIMA…AVVDFLPSPI (275 aa)) constitute a tr-type G domain. GTP-binding positions include 15–22 (AHIDAGKT), 79–83 (DTPGH), and 133–136 (NKMD).

The protein belongs to the TRAFAC class translation factor GTPase superfamily. Classic translation factor GTPase family. EF-G/EF-2 subfamily.

It localises to the cytoplasm. Catalyzes the GTP-dependent ribosomal translocation step during translation elongation. During this step, the ribosome changes from the pre-translocational (PRE) to the post-translocational (POST) state as the newly formed A-site-bound peptidyl-tRNA and P-site-bound deacylated tRNA move to the P and E sites, respectively. Catalyzes the coordinated movement of the two tRNA molecules, the mRNA and conformational changes in the ribosome. This chain is Elongation factor G, found in Ureaplasma parvum serovar 3 (strain ATCC 27815 / 27 / NCTC 11736).